Reading from the N-terminus, the 158-residue chain is Transcription elongation factor GreA (158 aa).

The stretch at 3–75 (TEKTYPMTQE…TQLENMIRNA (73 aa)) forms a coiled coil.

Belongs to the GreA/GreB family.

Its function is as follows. Necessary for efficient RNA polymerase transcription elongation past template-encoded arresting sites. The arresting sites in DNA have the property of trapping a certain fraction of elongating RNA polymerases that pass through, resulting in locked ternary complexes. Cleavage of the nascent transcript by cleavage factors such as GreA or GreB allows the resumption of elongation from the new 3'terminus. GreA releases sequences of 2 to 3 nucleotides. In Bacillus cereus (strain ATCC 14579 / DSM 31 / CCUG 7414 / JCM 2152 / NBRC 15305 / NCIMB 9373 / NCTC 2599 / NRRL B-3711), this protein is Transcription elongation factor GreA.